Reading from the N-terminus, the 251-residue chain is MADKLIYLIIPAYNEEKMIKNVVNNLQNHNYDNIIIVDDGSKDNTYKIMKELEEESKQNNNNNNNNNNNKVIAIKHEQNKGVGGATITGLKKAYELGADIAVTFDADGQHAPDDIAKVIQPIINDSKEYVVGSRIKNPKEFKNMPLTKKVGNLGLSFITFLLGGYYVTDSQSGLRAFSKSALKVLSEQLRAKRYETCSEALIIAKKNKLNIGEVPIKTIYTEYSMARGTNVMIGFKIFYRLLMLKMGKVLD.

Residues 150-167 (VGNLGLSFITFLLGGYYV) traverse the membrane as a helical segment.

The protein belongs to the glycosyltransferase 2 family.

It is found in the cell membrane. It catalyses the reaction a di-trans,poly-cis-dolichyl phosphate + UDP-N-acetyl-alpha-D-glucosamine = an N-acetyl-alpha-D-glucosaminyl-phospho-di-trans,poly-cis-dolichol + UDP. It functions in the pathway cell surface structure biogenesis; S-layer biogenesis. It participates in protein modification; protein glycosylation. Functionally, involved in the assembly of an N-linked disaccharide that decorates the S-layer glycoprotein and flagellins. AglK initiates N-linked glycosylation through the formation of alpha-linked dolichyl monophosphate N-acetylglucosamine. It catalyzes the transfer of GlcNAc from the donor substrate UDP-GlcNAc to dolichyl phosphate C55 (Dol-P) to yield Dol-P-GlcNAc. AglK reaction proceeds with retention of stereochemistry. The reaction is specific for UDP-GlcNAc. AglK shows a stronger preference for short dolichol (C55-60 Dol-P) substrates compared with the longer (C85-105 Dol-P). This is UDP-N-acetylglucosamine--dolichyl-phosphate N-acetylglucosaminyltransferase from Methanococcus voltae.